We begin with the raw amino-acid sequence, 207 residues long: Mediator of RNA polymerase II transcription subunit 18 (207 aa).

It belongs to the Mediator complex subunit 18 family. Component of the Mediator complex. Interacts with med17, prk1 and rbp1.

The protein localises to the nucleus. In terms of biological role, component of the Mediator complex, a coactivator involved in the regulated transcription of nearly all RNA polymerase II-dependent genes. Mediator functions as a bridge to convey information from gene-specific regulatory proteins to the basal RNA polymerase II transcription machinery. Mediator is recruited to promoters by direct interactions with regulatory proteins and serves as a scaffold for the assembly of a functional preinitiation complex with RNA polymerase II and the general transcription factors. The chain is Mediator of RNA polymerase II transcription subunit 18 (med18) from Schizosaccharomyces pombe (strain 972 / ATCC 24843) (Fission yeast).